A 96-amino-acid chain; its full sequence is DNA/RNA-binding protein Alba (96 aa).

Belongs to the histone-like Alba family.

The protein localises to the cytoplasm. It localises to the chromosome. Binds double-stranded DNA tightly but without sequence specificity. Involved in DNA compaction. The polypeptide is DNA/RNA-binding protein Alba (Methanocella arvoryzae (strain DSM 22066 / NBRC 105507 / MRE50)).